Consider the following 313-residue polypeptide: Ribosomal RNA small subunit methyltransferase H (313 aa).

Residues 35–37, Asp-55, Phe-80, Asp-102, and Gln-109 each bind S-adenosyl-L-methionine; that span reads GGH.

It belongs to the methyltransferase superfamily. RsmH family.

It localises to the cytoplasm. The catalysed reaction is cytidine(1402) in 16S rRNA + S-adenosyl-L-methionine = N(4)-methylcytidine(1402) in 16S rRNA + S-adenosyl-L-homocysteine + H(+). Its function is as follows. Specifically methylates the N4 position of cytidine in position 1402 (C1402) of 16S rRNA. The chain is Ribosomal RNA small subunit methyltransferase H from Shewanella loihica (strain ATCC BAA-1088 / PV-4).